Reading from the N-terminus, the 607-residue chain is Elongation factor 4 (607 aa).

In terms of domain architecture, tr-type G spans Glu-11–Glu-193. Residues Asp-23 to Thr-28 and Asn-140 to Asp-143 contribute to the GTP site.

This sequence belongs to the TRAFAC class translation factor GTPase superfamily. Classic translation factor GTPase family. LepA subfamily.

Its subcellular location is the cell membrane. The catalysed reaction is GTP + H2O = GDP + phosphate + H(+). Functionally, required for accurate and efficient protein synthesis under certain stress conditions. May act as a fidelity factor of the translation reaction, by catalyzing a one-codon backward translocation of tRNAs on improperly translocated ribosomes. Back-translocation proceeds from a post-translocation (POST) complex to a pre-translocation (PRE) complex, thus giving elongation factor G a second chance to translocate the tRNAs correctly. Binds to ribosomes in a GTP-dependent manner. In Staphylococcus haemolyticus (strain JCSC1435), this protein is Elongation factor 4.